We begin with the raw amino-acid sequence, 709 residues long: Pentatricopeptide repeat-containing protein At5g42310, chloroplastic (709 aa).

Residues 1–54 (MLLLQQPPLVSTRFHSLYFLTHHHHHHHRFFQPPISAFSATTSASLPSPSPSSS) constitute a chloroplast transit peptide. 14 PPR repeats span residues 196 to 230 (TPLT…GYQS), 231 to 267 (DFVN…KLEL), 268 to 302 (DVQL…GLSA), 303 to 337 (KTAT…GIKP), 338 to 372 (RTRA…GVSP), 373 to 407 (DEHT…DVQP), 408 to 442 (NSFV…GVKP), 443 to 477 (DRQF…GIEP), 478 to 512 (DRVT…GCLP), 513 to 547 (CATT…GILP), 548 to 582 (NVVT…GLKP), 583 to 617 (SSTM…GLKP), 618 to 652 (SLLA…GVKP), and 653 to 687 (DVVT…GCKP).

The protein belongs to the PPR family. P subfamily. In terms of assembly, interacts with PDE338.

Its subcellular location is the plastid. The protein localises to the chloroplast stroma. It is found in the chloroplast thylakoid. The protein resides in the chloroplast. Required for chloroplast protein synthesis and accumulation of subunits of the thylakoid protein complexes. Activates psaC and petA translation by binding their 5'-UTRs. Required for the correct processing of petB and petD mRNAs. Interacts with the petB and petD intergenic region and is required for the generation of petB and petD monocistronic RNAs. The chain is Pentatricopeptide repeat-containing protein At5g42310, chloroplastic from Arabidopsis thaliana (Mouse-ear cress).